We begin with the raw amino-acid sequence, 788 residues long: Endonuclease MutS2 (788 aa).

332 to 339 is an ATP binding site; the sequence is GPNTGGKT. In terms of domain architecture, Smr spans 713–788; sequence VDLRGMDAEE…GTGVTVVEIK (76 aa).

This sequence belongs to the DNA mismatch repair MutS family. MutS2 subfamily. Homodimer. Binds to stalled ribosomes, contacting rRNA.

Functionally, endonuclease that is involved in the suppression of homologous recombination and thus may have a key role in the control of bacterial genetic diversity. Its function is as follows. Acts as a ribosome collision sensor, splitting the ribosome into its 2 subunits. Detects stalled/collided 70S ribosomes which it binds and splits by an ATP-hydrolysis driven conformational change. Acts upstream of the ribosome quality control system (RQC), a ribosome-associated complex that mediates the extraction of incompletely synthesized nascent chains from stalled ribosomes and their subsequent degradation. Probably generates substrates for RQC. This is Endonuclease MutS2 from Clostridium botulinum (strain Loch Maree / Type A3).